The chain runs to 291 residues: 4-diphosphocytidyl-2-C-methyl-D-erythritol kinase (291 aa).

Residue Lys-11 is part of the active site. 97 to 107 is an ATP binding site; sequence PVAAGIGGGSS. The active site involves Asp-139.

The protein belongs to the GHMP kinase family. IspE subfamily.

The catalysed reaction is 4-CDP-2-C-methyl-D-erythritol + ATP = 4-CDP-2-C-methyl-D-erythritol 2-phosphate + ADP + H(+). It functions in the pathway isoprenoid biosynthesis; isopentenyl diphosphate biosynthesis via DXP pathway; isopentenyl diphosphate from 1-deoxy-D-xylulose 5-phosphate: step 3/6. In terms of biological role, catalyzes the phosphorylation of the position 2 hydroxy group of 4-diphosphocytidyl-2C-methyl-D-erythritol. The chain is 4-diphosphocytidyl-2-C-methyl-D-erythritol kinase from Methylorubrum extorquens (strain PA1) (Methylobacterium extorquens).